Consider the following 342-residue polypeptide: Deoxyguanosinetriphosphate triphosphohydrolase-like protein (342 aa).

An HD domain is found at 75-190; it reads RLVHTLEVSQ…VRFADKIAYV (116 aa).

It belongs to the dGTPase family. Type 2 subfamily.

This chain is Deoxyguanosinetriphosphate triphosphohydrolase-like protein, found in Clostridium perfringens (strain 13 / Type A).